The sequence spans 63 residues: Cytochrome c oxidase subunit 7C, mitochondrial (63 aa).

A mitochondrion-targeting transit peptide spans 1–16; sequence MLGQSIRRFTTSVVRR. Residues 17–33 are Mitochondrial matrix-facing; the sequence is SHYEEGPGKNLPFSVEN. N6-acetyllysine; alternate is present on Lys-25. Position 25 is an N6-succinyllysine; alternate (Lys-25). The chain crosses the membrane as a helical span at residues 34-60; sequence KWSLLAKMCLYFGSAFATPFLIVRHQL. At 61 to 63 the chain is on the mitochondrial intermembrane side; that stretch reads LKT.

Belongs to the cytochrome c oxidase VIIc family. In terms of assembly, component of the cytochrome c oxidase (complex IV, CIV), a multisubunit enzyme composed of 14 subunits. The complex is composed of a catalytic core of 3 subunits MT-CO1, MT-CO2 and MT-CO3, encoded in the mitochondrial DNA, and 11 supernumerary subunits COX4I, COX5A, COX5B, COX6A, COX6B, COX6C, COX7A, COX7B, COX7C, COX8 and NDUFA4, which are encoded in the nuclear genome. The complex exists as a monomer or a dimer and forms supercomplexes (SCs) in the inner mitochondrial membrane with NADH-ubiquinone oxidoreductase (complex I, CI) and ubiquinol-cytochrome c oxidoreductase (cytochrome b-c1 complex, complex III, CIII), resulting in different assemblies (supercomplex SCI(1)III(2)IV(1) and megacomplex MCI(2)III(2)IV(2)). Interacts with RAB5IF.

Its subcellular location is the mitochondrion inner membrane. Its pathway is energy metabolism; oxidative phosphorylation. Component of the cytochrome c oxidase, the last enzyme in the mitochondrial electron transport chain which drives oxidative phosphorylation. The respiratory chain contains 3 multisubunit complexes succinate dehydrogenase (complex II, CII), ubiquinol-cytochrome c oxidoreductase (cytochrome b-c1 complex, complex III, CIII) and cytochrome c oxidase (complex IV, CIV), that cooperate to transfer electrons derived from NADH and succinate to molecular oxygen, creating an electrochemical gradient over the inner membrane that drives transmembrane transport and the ATP synthase. Cytochrome c oxidase is the component of the respiratory chain that catalyzes the reduction of oxygen to water. Electrons originating from reduced cytochrome c in the intermembrane space (IMS) are transferred via the dinuclear copper A center (CU(A)) of subunit 2 and heme A of subunit 1 to the active site in subunit 1, a binuclear center (BNC) formed by heme A3 and copper B (CU(B)). The BNC reduces molecular oxygen to 2 water molecules using 4 electrons from cytochrome c in the IMS and 4 protons from the mitochondrial matrix. The polypeptide is Cytochrome c oxidase subunit 7C, mitochondrial (COX7C) (Pongo pygmaeus (Bornean orangutan)).